Consider the following 155-residue polypeptide: RNA pyrophosphohydrolase (155 aa).

A Nudix hydrolase domain is found at 5-149 (EYRSGVGIML…KKPLYEKILS (145 aa)). The Nudix box signature appears at 39-60 (GGLEAKETPEVGVLRELEEETG).

It belongs to the Nudix hydrolase family. RppH subfamily. The cofactor is a divalent metal cation.

Its function is as follows. Accelerates the degradation of transcripts by removing pyrophosphate from the 5'-end of triphosphorylated RNA, leading to a more labile monophosphorylated state that can stimulate subsequent ribonuclease cleavage. The chain is RNA pyrophosphohydrolase from Zymomonas mobilis subsp. mobilis (strain ATCC 31821 / ZM4 / CP4).